Here is a 201-residue protein sequence, read N- to C-terminus: Ras-related protein Rab-1B (201 aa).

Methionine 1 is subject to N-acetylmethionine. GTP contacts are provided by serine 17, glycine 18, valine 19, glycine 20, lysine 21, serine 22, cysteine 23, tyrosine 33, threonine 34, glutamate 35, serine 36, serine 39, and threonine 40. Serine 22 is a binding site for Mg(2+). The Switch 1 signature appears at 30–45; the sequence is DDTYTESYISTIGVDF. Residues threonine 40 and aspartate 63 each contribute to the Mg(2+) site. A switch 2 region; required for interaction with REP1/CHM region spans residues 64–83; it reads TAGQERFRTITSSYYRGAHG. Positions 65–80 match the Switch 2 motif; that stretch reads AGQERFRTITSSYYRG. Glycine 66 serves as a coordination point for GTP. Residue serine 76 is modified to (Microbial infection) O-(2-cholinephosphoryl)serine. Tyrosine 77 is subject to (Microbial infection) O-AMP-tyrosine. Asparagine 121, lysine 122, aspartate 124, serine 151, alanine 152, and lysine 153 together coordinate GTP. The tract at residues 174–201 is disordered; the sequence is GPGAASGGERPNLKIDSTPVKPAGGGCC. Residues cysteine 200 and cysteine 201 are each lipidated (S-geranylgeranyl cysteine). The residue at position 201 (cysteine 201) is a Cysteine methyl ester.

This sequence belongs to the small GTPase superfamily. Rab family. As to quaternary structure, interacts with MICAL1 and MICAL2. Interacts (in GTP-bound form) with MICALCL, MICAL1 and MILCAL3. Interacts with GDI1; the interaction requires the GDP-bound state. Interacts with CHM/REP1; the interaction requires the GDP-bound form and is necessary for prenylation by GGTase II. Interacts with RabGAP TBC1D20. Interacts (in GDP-bound form) with lipid phosphatase MTMR6 (via GRAM domain); the interaction regulates MTMR6 recruitment to the endoplasmic reticulum-Golgi intermediate compartment. Interacts (in GDP-bound form) with lipid phosphatase MTMR7. (Microbial infection) Interacts with L.pneumophila AnkX. Interacts with L.pneumophila Lem3. Interacts with L.pneumophila SidD. Interacts with L.pneumophila DrrA. Mg(2+) is required as a cofactor. Prenylated; by GGTase II, only after interaction of the substrate with Rab escort protein 1 (REP1). In terms of processing, (Microbial infection) AMPylation at Tyr-77 by L.pneumophila DrrA occurs in the switch 2 region and leads to moderate inactivation of the GTPase activity. It appears to prolong the lifetime of the GTP state of RAB1B by restricting access of GTPase effectors to switch 2 and blocking effector-stimulated GTP hydrolysis, thereby rendering RAB1B constitutively active. It is later de-AMPylated by L.pneumophila SidD, releasing RAB1B from bacterial phagosomes. Post-translationally, (Microbial infection) Phosphocholinated at Ser-76 by L.pneumophila AnkX, leading to displace GDP dissociation inhibitors (GDI). Both GDP-bound and GTP-bound forms can be phosphocholinated. Dephosphocholinated by L.pneumophila Lem3, restoring accessibility to L.pneumophila GTPase effector LepB. (Microbial infection) Glycosylated by S.typhimurium protein Ssek3: arginine GlcNAcylation prevents GTPase activity, thereby disrupting vesicular protein transport from the endoplasmic reticulum (ER) to the Golgi compartment.

The protein localises to the cytoplasm. It localises to the membrane. The protein resides in the preautophagosomal structure membrane. Its subcellular location is the perinuclear region. It catalyses the reaction GTP + H2O = GDP + phosphate + H(+). With respect to regulation, regulated by guanine nucleotide exchange factors (GEFs) which promote the exchange of bound GDP for free GTP. Regulated by GTPase activating proteins (GAPs) including TBC1D20 which increases the GTP hydrolysis activity. Inhibited by GDP dissociation inhibitors (GDIs). Its function is as follows. The small GTPases Rab are key regulators of intracellular membrane trafficking, from the formation of transport vesicles to their fusion with membranes. Rabs cycle between an inactive GDP-bound form and an active GTP-bound form that is able to recruit to membranes different set of downstream effectors directly responsible for vesicle formation, movement, tethering and fusion. Plays a role in the initial events of the autophagic vacuole development which take place at specialized regions of the endoplasmic reticulum. Regulates vesicular transport between the endoplasmic reticulum and successive Golgi compartments. Required to modulate the compacted morphology of the Golgi. Promotes the recruitment of lipid phosphatase MTMR6 to the endoplasmic reticulum-Golgi intermediate compartment. This Homo sapiens (Human) protein is Ras-related protein Rab-1B.